The sequence spans 455 residues: MEKPIVAIVGRPNVGKSTLFNKLIGERRAIIADEAGTTRDRQYGETIWNGRVFTIVDTAGLLVGDDDPNLPLAEIVRRTHQQAQLAIDEADVIVFMVDVREGLIAADEEVAALLRRSSKPVVLGVNKADTEDRRQNAVEFYNLGLGDPIALSAYHGTGSGDLLDEIVRHLPAGQEEEEDDNSLKIAIVGRPNVGKSSLLNKLVGEERVVVSNIPGTTRDSIDTKLTYKGIPITLIDTAGIRRRGSIEQGIERYSVLRTMKAIERCHIALILVDAQEGPTAQDTHVAGMVLEANKGLAIIVNKWDLIDKAKFSYEDAKTTMSQVFHFAPYAPIEFISAKTGQRATKVLDIAQTIQSERNKRVSTSDINNLLRAAVREHPPTAMHKGAHLRLFYATQAQVEPPVFLFFSNAPEQVHFGYKRYLENRIREQYGFIGTPIILVFKGREEEQTVSVSGKR.

EngA-type G domains follow at residues 4-174 and 183-358; these read PIVA…PAGQ and LKIA…SERN. Residues 10 to 17, 57 to 61, 126 to 129, 189 to 196, 236 to 240, and 301 to 304 contribute to the GTP site; these read GRPNVGKS, DTAGL, NKAD, DTAGI, and NKWD. A KH-like domain is found at 359–444; the sequence is KRVSTSDINN…PIILVFKGRE (86 aa).

This sequence belongs to the TRAFAC class TrmE-Era-EngA-EngB-Septin-like GTPase superfamily. EngA (Der) GTPase family. As to quaternary structure, associates with the 50S ribosomal subunit.

In terms of biological role, GTPase that plays an essential role in the late steps of ribosome biogenesis. The polypeptide is GTPase Der (Herpetosiphon aurantiacus (strain ATCC 23779 / DSM 785 / 114-95)).